The following is a 798-amino-acid chain: Acetyl-CoA decarbonylase/synthase complex subunit alpha 2 (798 aa).

[4Fe-4S] cluster contacts are provided by Cys-65, Cys-68, Cys-69, Cys-71, Cys-76, and Cys-86. A CO-binding site is contributed by His-109. 3 residues coordinate [Ni-4Fe-4S] cluster: His-246, Cys-274, and Cys-313. 2 consecutive 4Fe-4S ferredoxin-type domains span residues 395-424 and 434-463; these read EEQF…IGEA and SKLE…IDMY. Positions 405, 408, 411, 415, 443, 446, 449, and 453 each coordinate [4Fe-4S] cluster. [Ni-4Fe-4S] cluster-binding residues include Cys-511, Cys-540, and Cys-575.

It belongs to the Ni-containing carbon monoxide dehydrogenase family. As to quaternary structure, heterotetramer of two alpha and two epsilon subunits. The ACDS complex is made up of alpha, epsilon, beta, gamma and delta subunits with a probable stoichiometry of (alpha(2)epsilon(2))(4)-beta(8)-(gamma(1)delta(1))(8). [4Fe-4S] cluster is required as a cofactor. Requires [Ni-4Fe-4S] cluster as cofactor.

The catalysed reaction is CO + 2 oxidized [2Fe-2S]-[ferredoxin] + H2O = 2 reduced [2Fe-2S]-[ferredoxin] + CO2 + 2 H(+). Part of the ACDS complex that catalyzes the reversible cleavage of acetyl-CoA, allowing autotrophic growth from CO(2). The alpha-epsilon subcomponent functions as a carbon monoxide dehydrogenase. The protein is Acetyl-CoA decarbonylase/synthase complex subunit alpha 2 of Archaeoglobus fulgidus (strain ATCC 49558 / DSM 4304 / JCM 9628 / NBRC 100126 / VC-16).